A 513-amino-acid chain; its full sequence is ATP synthase subunit alpha (513 aa).

169 to 176 (GDRQIGKT) contacts ATP.

This sequence belongs to the ATPase alpha/beta chains family. F-type ATPases have 2 components, CF(1) - the catalytic core - and CF(0) - the membrane proton channel. CF(1) has five subunits: alpha(3), beta(3), gamma(1), delta(1), epsilon(1). CF(0) has three main subunits: a(1), b(2) and c(9-12). The alpha and beta chains form an alternating ring which encloses part of the gamma chain. CF(1) is attached to CF(0) by a central stalk formed by the gamma and epsilon chains, while a peripheral stalk is formed by the delta and b chains.

It is found in the cell inner membrane. It catalyses the reaction ATP + H2O + 4 H(+)(in) = ADP + phosphate + 5 H(+)(out). In terms of biological role, produces ATP from ADP in the presence of a proton gradient across the membrane. The alpha chain is a regulatory subunit. This Shewanella sediminis (strain HAW-EB3) protein is ATP synthase subunit alpha.